The sequence spans 893 residues: DNA mismatch repair protein MutS (893 aa).

An ATP-binding site is contributed by 631–638; that stretch reads GPNMAGKS. The segment at 821–858 is disordered; that stretch reads AGRPRVAVRQPQGGRRGASTGQLGLFGMEPAQGGTGVT.

The protein belongs to the DNA mismatch repair MutS family.

In terms of biological role, this protein is involved in the repair of mismatches in DNA. It is possible that it carries out the mismatch recognition step. This protein has a weak ATPase activity. In Myxococcus xanthus (strain DK1622), this protein is DNA mismatch repair protein MutS.